A 194-amino-acid chain; its full sequence is MKTLSILDTIIKIPEKIEIHPTTTEYIYTITGPLGSSSINLKKLDKNGIACINFDIQNKQVLIRSLYPKYNGLYKKLIENKFLGVSRGFCVYLEIVGVGYRAALLSSSLQNSTKDTNDTIVLKLGHSHDIHYKVPNGVRVFLQSPSEICIFGVDLNQVTQVAHSIRNTRPPSVYKGKGIRYTNEKIVTKTGKRK.

It belongs to the universal ribosomal protein uL6 family.

Its subcellular location is the mitochondrion. This chain is Large ribosomal subunit protein uL6m (RPL6), found in Prototheca wickerhamii.